The primary structure comprises 586 residues: Aspartate--tRNA(Asp/Asn) ligase (586 aa).

Residue Glu172 participates in L-aspartate binding. Residues 196 to 199 are aspartate; it reads QLYK. Residue Arg218 participates in L-aspartate binding. Residues 218 to 220 and Gln227 each bind ATP; that span reads RDE. His446 provides a ligand contact to L-aspartate. ATP is bound at residue Glu480. Residue Arg487 participates in L-aspartate binding. 532–535 contributes to the ATP binding site; the sequence is GIDR.

This sequence belongs to the class-II aminoacyl-tRNA synthetase family. Type 1 subfamily. In terms of assembly, homodimer.

The protein localises to the cytoplasm. It catalyses the reaction tRNA(Asx) + L-aspartate + ATP = L-aspartyl-tRNA(Asx) + AMP + diphosphate. Functionally, aspartyl-tRNA synthetase with relaxed tRNA specificity since it is able to aspartylate not only its cognate tRNA(Asp) but also tRNA(Asn). Reaction proceeds in two steps: L-aspartate is first activated by ATP to form Asp-AMP and then transferred to the acceptor end of tRNA(Asp/Asn). This Borrelia garinii subsp. bavariensis (strain ATCC BAA-2496 / DSM 23469 / PBi) (Borreliella bavariensis) protein is Aspartate--tRNA(Asp/Asn) ligase.